The sequence spans 110 residues: MRVLTGGVSPSSSSFEFVPLSVVSFGSTVIAEGCDAATSISWIHAWTVANGIITQVREYSNTSLTVTRIGNVVAGRRSAEIAPPSHCSSVWESQFSGRAGKPVPGLVLAI.

The chain is Senescence associated gene 20 from Arabidopsis thaliana (Mouse-ear cress).